Consider the following 155-residue polypeptide: Small ribosomal subunit protein uS7cz/uS7cy (155 aa).

Belongs to the universal ribosomal protein uS7 family. Part of the 30S ribosomal subunit.

The protein localises to the plastid. The protein resides in the chloroplast. Its function is as follows. One of the primary rRNA binding proteins, it binds directly to 16S rRNA where it nucleates assembly of the head domain of the 30S subunit. The chain is Small ribosomal subunit protein uS7cz/uS7cy (rps7-A) from Crucihimalaya wallichii (Rock-cress).